Consider the following 66-residue polypeptide: Phylloseptin-Az2 (66 aa).

Positions 1 to 22 are cleaved as a signal peptide; the sequence is MAFLKKSLFLVLFLGLVSLSIC. The propeptide occupies 23–44; it reads EEEKRETEEKENEQEDDDKSEE. Residues 24–45 form a disordered region; sequence EEKRETEEKENEQEDDDKSEEK. Residues 31 to 41 are compositionally biased toward acidic residues; that stretch reads EKENEQEDDDK. At Phe65 the chain carries Phenylalanine amide.

In terms of tissue distribution, expressed by the skin glands.

The protein resides in the secreted. Functionally, has antibacterial activity against the Gram-negative bacteria E.coli ATCC 11775 (MIC=7.2 uM), and the Gram-positive bacteria S.aureus ATCC 12600 (MIC=3.6 uM) and M.luteus ATCC 49732 (MIC=1.8 uM). Does not inhibit the growth of the fungus C.albicans. This chain is Phylloseptin-Az2, found in Pithecopus azureus (Orange-legged monkey tree frog).